The sequence spans 321 residues: Methionyl-tRNA formyltransferase (321 aa).

Residue 111-114 (SLLP) participates in (6S)-5,6,7,8-tetrahydrofolate binding.

The protein belongs to the Fmt family.

It carries out the reaction L-methionyl-tRNA(fMet) + (6R)-10-formyltetrahydrofolate = N-formyl-L-methionyl-tRNA(fMet) + (6S)-5,6,7,8-tetrahydrofolate + H(+). Attaches a formyl group to the free amino group of methionyl-tRNA(fMet). The formyl group appears to play a dual role in the initiator identity of N-formylmethionyl-tRNA by promoting its recognition by IF2 and preventing the misappropriation of this tRNA by the elongation apparatus. The chain is Methionyl-tRNA formyltransferase from Bifidobacterium animalis subsp. lactis (strain AD011).